The sequence spans 156 residues: Small ribosomal subunit protein uS7 (156 aa).

This sequence belongs to the universal ribosomal protein uS7 family. As to quaternary structure, part of the 30S ribosomal subunit. Contacts proteins S9 and S11.

Functionally, one of the primary rRNA binding proteins, it binds directly to 16S rRNA where it nucleates assembly of the head domain of the 30S subunit. Is located at the subunit interface close to the decoding center, probably blocks exit of the E-site tRNA. This chain is Small ribosomal subunit protein uS7, found in Deinococcus radiodurans (strain ATCC 13939 / DSM 20539 / JCM 16871 / CCUG 27074 / LMG 4051 / NBRC 15346 / NCIMB 9279 / VKM B-1422 / R1).